The sequence spans 114 residues: Large ribosomal subunit protein uL22c (114 aa).

This sequence belongs to the universal ribosomal protein uL22 family. As to quaternary structure, part of the 50S ribosomal subunit.

The protein resides in the plastid. It localises to the cyanelle. This protein binds specifically to 23S rRNA. Its function is as follows. The globular domain of the protein is located near the polypeptide exit tunnel on the outside of the subunit, while an extended beta-hairpin is found that lines the wall of the exit tunnel in the center of the 70S ribosome. The chain is Large ribosomal subunit protein uL22c (rpl22) from Cyanophora paradoxa.